The chain runs to 121 residues: Probable tail terminator protein (121 aa).

Belongs to the Skunalikevirus tail terminator protein family. In terms of assembly, homohexamer. Interacts with the tail tube protein.

The protein localises to the virion. In terms of biological role, plays an essential role in tail assembly by capping the rapidly polymerizing tail once it has reached its requisite length and serving as the interaction surface for the connector and the tail tube proteins. The polypeptide is Probable tail terminator protein (Lactococcus lactis (Lactococcus lactis bacteriophage p2)).